Consider the following 160-residue polypeptide: Large ribosomal subunit protein eL21A (160 aa).

A disordered region spans residues 114–138 (AKRKEAKAQGKTVQLRRQPAPPAKA).

Belongs to the eukaryotic ribosomal protein eL21 family. As to quaternary structure, component of the large ribosomal subunit (LSU). Mature yeast ribosomes consist of a small (40S) and a large (60S) subunit. The 40S small subunit contains 1 molecule of ribosomal RNA (18S rRNA) and at least 33 different proteins. The large 60S subunit contains 3 rRNA molecules (25S, 5.8S and 5S rRNA) and at least 46 different proteins.

It localises to the cytoplasm. Functionally, component of the ribosome, a large ribonucleoprotein complex responsible for the synthesis of proteins in the cell. The small ribosomal subunit (SSU) binds messenger RNAs (mRNAs) and translates the encoded message by selecting cognate aminoacyl-transfer RNA (tRNA) molecules. The large subunit (LSU) contains the ribosomal catalytic site termed the peptidyl transferase center (PTC), which catalyzes the formation of peptide bonds, thereby polymerizing the amino acids delivered by tRNAs into a polypeptide chain. The nascent polypeptides leave the ribosome through a tunnel in the LSU and interact with protein factors that function in enzymatic processing, targeting, and the membrane insertion of nascent chains at the exit of the ribosomal tunnel. The chain is Large ribosomal subunit protein eL21A (rpl2101) from Schizosaccharomyces pombe (strain 972 / ATCC 24843) (Fission yeast).